Reading from the N-terminus, the 118-residue chain is UPF0344 protein Aflv_2205 (118 aa).

The next 4 membrane-spanning stretches (helical) occupy residues Ala4 to Ala24, Met32 to Leu52, Phe60 to Leu80, and Phe96 to Phe116.

It belongs to the UPF0344 family.

The protein localises to the cell membrane. This chain is UPF0344 protein Aflv_2205, found in Anoxybacillus flavithermus (strain DSM 21510 / WK1).